Reading from the N-terminus, the 54-residue chain is MLHYAVVFFVIALIAALFGFGGIAASAVSIGKILFIVFAILAVASFLFGLIKKR.

Helical transmembrane passes span 5–25 (AVVF…GIAA) and 30–50 (IGKI…LFGL).

This sequence belongs to the UPF0391 family.

Its subcellular location is the cell membrane. This is UPF0391 membrane protein Rfer_1875 from Albidiferax ferrireducens (strain ATCC BAA-621 / DSM 15236 / T118) (Rhodoferax ferrireducens).